Consider the following 145-residue polypeptide: SsrA-binding protein (145 aa).

The protein belongs to the SmpB family.

Its subcellular location is the cytoplasm. In terms of biological role, required for rescue of stalled ribosomes mediated by trans-translation. Binds to transfer-messenger RNA (tmRNA), required for stable association of tmRNA with ribosomes. tmRNA and SmpB together mimic tRNA shape, replacing the anticodon stem-loop with SmpB. tmRNA is encoded by the ssrA gene; the 2 termini fold to resemble tRNA(Ala) and it encodes a 'tag peptide', a short internal open reading frame. During trans-translation Ala-aminoacylated tmRNA acts like a tRNA, entering the A-site of stalled ribosomes, displacing the stalled mRNA. The ribosome then switches to translate the ORF on the tmRNA; the nascent peptide is terminated with the 'tag peptide' encoded by the tmRNA and targeted for degradation. The ribosome is freed to recommence translation, which seems to be the essential function of trans-translation. The sequence is that of SsrA-binding protein from Mycoplasmopsis pulmonis (strain UAB CTIP) (Mycoplasma pulmonis).